Reading from the N-terminus, the 246-residue chain is MSGHSKWANIKHKKEKMDAKKGRIFTKLTKDIIKAAKEGGGDPNTNSKLRDAIEKAKANNLPNENIQRAIKKGTGELGGANLEEVIYEGYGPSGTAIIVEALTDNKNRTAGEIRHIFDRHGGSLGAAGSVTWMFDKVGIIIVEKDNSIDEDELAMVAIDAGAQDFSAEDEEFEIITEPSNFQEVKEAIEKAGYKISEAEVTMLPKNTIQLSPEDYEKFEKLIDKLEENDDVQNVYHNVEIEDENDE.

Residues 1–21 (MSGHSKWANIKHKKEKMDAKK) form a disordered region.

It belongs to the TACO1 family.

It localises to the cytoplasm. The protein is Probable transcriptional regulatory protein Teth39_1009 of Thermoanaerobacter pseudethanolicus (strain ATCC 33223 / 39E) (Clostridium thermohydrosulfuricum).